The chain runs to 327 residues: Auxin-responsive protein IAA18 (327 aa).

Disordered stretches follow at residues 26–45, 52–98, and 180–202; these read VKEA…DEDK, GLPG…IGTT, and NLTN…DDKA. Positions 49–53 match the EAR-like (transcriptional repression) motif; sequence LKLGL. Residues 58 to 69 are compositionally biased toward basic and acidic residues; that stretch reads QEERAADSREKI. The span at 70–82 shows a compositional bias: low complexity; that stretch reads QQQQRESSSEPSI. Residues 180 to 189 are compositionally biased toward polar residues; the sequence is NLTNGSSFKQ. Residues 190-202 are compositionally biased toward basic and acidic residues; that stretch reads SPERQNDEADDKA. The PB1 domain maps to 209-313; that stretch reads RPLVKINMDG…TVKRLRVMRR (105 aa).

The protein belongs to the Aux/IAA family. Homodimers and heterodimers. Highly expressed in flowers. Expressed in roots and etiolated seedlings.

It is found in the nucleus. Aux/IAA proteins are short-lived transcriptional factors that function as repressors of early auxin response genes at low auxin concentrations. This is Auxin-responsive protein IAA18 (IAA18) from Oryza sativa subsp. japonica (Rice).